Here is a 360-residue protein sequence, read N- to C-terminus: A-type ATP synthase subunit C (360 aa).

The protein belongs to the V-ATPase V0D/AC39 subunit family. Has multiple subunits, A(3), B(3), C, D, E, F, G, I and K(x); there may be a few other subunits as well.

The protein resides in the cell membrane. Its function is as follows. Component of the A-type ATP synthase that produces ATP from ADP in the presence of a proton gradient across the membrane. The protein is A-type ATP synthase subunit C of Methanosarcina mazei (strain ATCC BAA-159 / DSM 3647 / Goe1 / Go1 / JCM 11833 / OCM 88) (Methanosarcina frisia).